A 602-amino-acid polypeptide reads, in one-letter code: Sodium-independent sulfate anion transporter (602 aa).

Residues 1–47 (MSPPMSPMKPPKGFAPMSCCWSTETMQKWLPFLGWLPDYTWYALKMD) are Extracellular-facing. Residues 48 to 68 (FIAGISVGLTVIPQALAYAEV) traverse the membrane as a helical segment. Ala-69 is a topological domain (cytoplasmic). A helical membrane pass occupies residues 70 to 90 (GLPPQYGLYSAFMGCFVYFFL). The Extracellular portion of the chain corresponds to 91-115 (GTSRDVTLGPTAIMSLLVSFYTFHE). Residues 116 to 136 (PAYAVLLAFLTGCIQLGMGFL) traverse the membrane as a helical segment. The Cytoplasmic segment spans residues 137–143 (RLGLLLD). A helical transmembrane segment spans residues 144–164 (FISCPVIKGFTSAAAIIIGFG). The Extracellular portion of the chain corresponds to 165–193 (QIKNLLGLQHIPRQFFLQVYYTFHNIGET). Residues 194–214 (RVGDAVLGLVCMVLLLVLKLM) form a helical membrane-spanning segment. Residues 215-246 (RDHVPPVHPEMPTGVRLSHGLVWTATTARNAL) are Cytoplasmic-facing. The chain crosses the membrane as a helical span at residues 247–267 (VVSFAALVAYSFQVTGYQPFV). Residues 268–300 (LTGKTPEGLPDAHIPPFSVTTANGTISFTEMVQ) lie on the Extracellular side of the membrane. A helical transmembrane segment spans residues 301-321 (GMGAGLVVVPLMGLLESIAVA). Topologically, residues 322-337 (KSFASQNNYRINSNQE) are cytoplasmic. A helical membrane pass occupies residues 338–358 (LLALGFTNILGSLFSSYPVTG). The Extracellular segment spans residues 359 to 370 (SFGRTAVNAQSG). A helical membrane pass occupies residues 371–391 (VCTPAGGLMTGALVLLSLDYL). The Cytoplasmic segment spans residues 392–394 (TSL). The chain crosses the membrane as a helical span at residues 395-415 (FYYIPKSALAAVIIMAVVPLF). The Extracellular portion of the chain corresponds to 416 to 438 (DTKIVKTLWRVKRLDLLPLCVTF). A helical transmembrane segment spans residues 439–459 (LLCFWEVQYGILAGTLVSVLI). The Cytoplasmic portion of the chain corresponds to 460–602 (LLHSVARPKI…PEHKIALLKA (143 aa)). Positions 466–580 (RPKIQVSEGP…EAEKYLKQEP (115 aa)) constitute an STAS domain.

This sequence belongs to the SLC26A/SulP transporter (TC 2.A.53) family.

The protein resides in the cell membrane. Its subcellular location is the lysosome membrane. The protein localises to the apical cell membrane. It localises to the basolateral cell membrane. The catalysed reaction is hydrogencarbonate(in) + chloride(out) = hydrogencarbonate(out) + chloride(in). The enzyme catalyses sulfate(in) + H(+)(in) = sulfate(out) + H(+)(out). It catalyses the reaction oxalate(in) + chloride(out) = oxalate(out) + chloride(in). Sodium-independent anion exchanger mediating bicarbonate, chloride, sulfate and oxalate transport. Exhibits sodium-independent sulfate anion transporter activity that may cooperate with SLC26A2 to mediate DIDS-sensitive sulfate uptake into high endothelial venules endothelial cells (HEVEC). In the kidney, mediates chloride-bicarbonate exchange, facilitating V-ATPase-mediated acid secretion. May function as a chloride channel, playing an important role in moderating chloride homeostasis and neuronal activity in the cerebellum. The polypeptide is Sodium-independent sulfate anion transporter (Bos taurus (Bovine)).